Reading from the N-terminus, the 348-residue chain is Phospho-2-dehydro-3-deoxyheptonate aldolase, Trp-sensitive (348 aa).

Belongs to the class-I DAHP synthase family.

It catalyses the reaction D-erythrose 4-phosphate + phosphoenolpyruvate + H2O = 7-phospho-2-dehydro-3-deoxy-D-arabino-heptonate + phosphate. The protein operates within metabolic intermediate biosynthesis; chorismate biosynthesis; chorismate from D-erythrose 4-phosphate and phosphoenolpyruvate: step 1/7. In terms of biological role, stereospecific condensation of phosphoenolpyruvate (PEP) and D-erythrose-4-phosphate (E4P) giving rise to 3-deoxy-D-arabino-heptulosonate-7-phosphate (DAHP). The protein is Phospho-2-dehydro-3-deoxyheptonate aldolase, Trp-sensitive (aroH) of Escherichia coli O6:H1 (strain CFT073 / ATCC 700928 / UPEC).